Here is a 445-residue protein sequence, read N- to C-terminus: Flagellum-associated coiled-coil domain-containing protein 1 (445 aa).

The tract at residues 26–47 is disordered; sequence PQLPRKNSTGSSKLTPLVPAPK. The span at 30–39 shows a compositional bias: polar residues; sequence RKNSTGSSKL. Coiled coils occupy residues 122–226 and 283–315; these read SRTN…TYQD and AVFE…TKEV. K376 carries the post-translational modification N6-acetyllysine. Residues 387–414 adopt a coiled-coil conformation; sequence EKYKHTIQILTEENIHLKQKIISKNEEI.

Its subcellular location is the cytoplasm. It localises to the cytoplasmic granule. The protein localises to the cell projection. It is found in the cilium. The protein resides in the flagellum. This Homo sapiens (Human) protein is Flagellum-associated coiled-coil domain-containing protein 1.